Consider the following 839-residue polypeptide: Protein translocase subunit SecA (839 aa).

ATP is bound by residues Gln85, 103 to 107 (GEGKT), and Asp493. Over residues 780 to 790 (QIHEQERERAS) the composition is skewed to basic and acidic residues. Residues 780 to 839 (QIHEQERERASQRATTAAPQNIQSQQSANTDDLPKVERNEACPCGSGKKFKNCHGRKSFS) form a disordered region. Residues 791–809 (QRATTAAPQNIQSQQSANT) are compositionally biased toward polar residues. Cys821, Cys823, Cys832, and His833 together coordinate Zn(2+). The segment covering 827-839 (KKFKNCHGRKSFS) has biased composition (basic residues).

This sequence belongs to the SecA family. In terms of assembly, monomer and homodimer. Part of the essential Sec protein translocation apparatus which comprises SecA, SecYEG and auxiliary proteins SecDF. Other proteins may also be involved. Zn(2+) serves as cofactor.

The protein localises to the cell membrane. It localises to the cytoplasm. It carries out the reaction ATP + H2O + cellular proteinSide 1 = ADP + phosphate + cellular proteinSide 2.. In terms of biological role, part of the Sec protein translocase complex. Interacts with the SecYEG preprotein conducting channel. Has a central role in coupling the hydrolysis of ATP to the transfer of proteins into and across the cell membrane, serving as an ATP-driven molecular motor driving the stepwise translocation of polypeptide chains across the membrane. This Streptococcus pyogenes serotype M6 (strain ATCC BAA-946 / MGAS10394) protein is Protein translocase subunit SecA.